We begin with the raw amino-acid sequence, 267 residues long: Luciferase (267 aa).

Residue N4 is glycosylated (N-linked (GlcNAc...) asparagine). A helical transmembrane segment spans residues 17–39 (LSSRSIAITCGVVLASAIAFPII).

It belongs to the fungal luciferase family.

Its subcellular location is the membrane. It carries out the reaction 3-hydroxyhispidin + O2 = (E)-caffeoylpyruvate + hnu + CO2. The catalysed reaction is 3-hydroxyhispidin + O2 = 4-[(E)-2-(3,4-dihydroxyphenyl)ethenyl]-1,7-dihydroxy-2,3,5-trioxabicyclo[2.2.2]oct-7-en-6-one. Functionally, luciferase; part of the gene cluster that mediates the fungal bioluminescence cycle. Uses the fungal luciferin 3-hydroxyhispidin as a substrate to produce an endoperoxide as a high-energy intermediate with decomposition that yields oxyluciferin (also known as caffeoylpyruvate) and light emission. The fungal bioluminescence cycle begins with the hispidin synthetase that catalyzes the formation of hispidin which is further hydroxylated by the hispidin-3-hydroxylase, yielding the fungal luciferin 3-hydroxyhispidin. The luciferase then produces an endoperoxide as a high-energy intermediate with decomposition that yields oxyluciferin and light emission. Oxyluciferin can be recycled to caffeic acid by caffeoylpyruvate hydrolase. This Neonothopanus nambi (Agaricus nambi) protein is Luciferase.